A 485-amino-acid polypeptide reads, in one-letter code: Glutamate--tRNA ligase 2 (485 aa).

The 'HIGH' region signature appears at 10-20 (PSPTGPIHIGN). The 'KMSKS' region motif lies at 252-256 (KLSKR). K255 contributes to the ATP binding site.

It belongs to the class-I aminoacyl-tRNA synthetase family. Glutamate--tRNA ligase type 1 subfamily. Monomer.

Its subcellular location is the cytoplasm. It carries out the reaction tRNA(Glu) + L-glutamate + ATP = L-glutamyl-tRNA(Glu) + AMP + diphosphate. Its function is as follows. Catalyzes the attachment of glutamate to tRNA(Glu) in a two-step reaction: glutamate is first activated by ATP to form Glu-AMP and then transferred to the acceptor end of tRNA(Glu). This chain is Glutamate--tRNA ligase 2, found in Caldanaerobacter subterraneus subsp. tengcongensis (strain DSM 15242 / JCM 11007 / NBRC 100824 / MB4) (Thermoanaerobacter tengcongensis).